A 207-amino-acid chain; its full sequence is Small ribosomal subunit protein uS4c (207 aa).

One can recognise an S4 RNA-binding domain in the interval 92 to 153 (MRLDNILFRL…PKIYQSIITK (62 aa)).

Belongs to the universal ribosomal protein uS4 family. In terms of assembly, part of the 30S ribosomal subunit. Contacts protein S5. The interaction surface between S4 and S5 is involved in control of translational fidelity.

Its subcellular location is the plastid. The protein localises to the chloroplast. Its function is as follows. One of the primary rRNA binding proteins, it binds directly to 16S rRNA where it nucleates assembly of the body of the 30S subunit. Functionally, with S5 and S12 plays an important role in translational accuracy. The protein is Small ribosomal subunit protein uS4c (rps4) of Equisetum bogotense (Horsetail).